The chain runs to 196 residues: Phosphoheptose isomerase (196 aa).

One can recognise an SIS domain in the interval Met36–Asp196. Asn51–Gly53 provides a ligand contact to substrate. Zn(2+) is bound by residues His60 and Glu64. Residues Glu64, Asn93–Asp94, Ser119–Ser121, Ser124, and Gln174 contribute to the substrate site. 2 residues coordinate Zn(2+): Gln174 and His182.

Belongs to the SIS family. GmhA subfamily. In terms of assembly, homotetramer. Zn(2+) serves as cofactor.

It localises to the cytoplasm. It catalyses the reaction 2 D-sedoheptulose 7-phosphate = D-glycero-alpha-D-manno-heptose 7-phosphate + D-glycero-beta-D-manno-heptose 7-phosphate. Its pathway is carbohydrate biosynthesis; D-glycero-D-manno-heptose 7-phosphate biosynthesis; D-glycero-alpha-D-manno-heptose 7-phosphate and D-glycero-beta-D-manno-heptose 7-phosphate from sedoheptulose 7-phosphate: step 1/1. Catalyzes the isomerization of sedoheptulose 7-phosphate in D-glycero-D-manno-heptose 7-phosphate. The chain is Phosphoheptose isomerase from Laribacter hongkongensis (strain HLHK9).